The primary structure comprises 257 residues: Acetyl-coenzyme A carboxylase carboxyl transferase subunit beta 1 (257 aa).

In terms of domain architecture, CoA carboxyltransferase N-terminal spans methionine 1 to alanine 257.

It belongs to the AccD/PCCB family. As to quaternary structure, acetyl-CoA carboxylase is a heterohexamer composed of biotin carboxyl carrier protein (AccB), biotin carboxylase (AccC) and two subunits each of ACCase subunit alpha (AccA) and ACCase subunit beta (AccD).

Its subcellular location is the cytoplasm. The catalysed reaction is N(6)-carboxybiotinyl-L-lysyl-[protein] + acetyl-CoA = N(6)-biotinyl-L-lysyl-[protein] + malonyl-CoA. It participates in lipid metabolism; malonyl-CoA biosynthesis; malonyl-CoA from acetyl-CoA: step 1/1. Functionally, component of the acetyl coenzyme A carboxylase (ACC) complex. Biotin carboxylase (BC) catalyzes the carboxylation of biotin on its carrier protein (BCCP) and then the CO(2) group is transferred by the transcarboxylase to acetyl-CoA to form malonyl-CoA. This Lachnospira eligens (strain ATCC 27750 / DSM 3376 / VPI C15-48 / C15-B4) (Eubacterium eligens) protein is Acetyl-coenzyme A carboxylase carboxyl transferase subunit beta 1.